Here is a 139-residue protein sequence, read N- to C-terminus: D-ribose pyranase (139 aa).

Residue His-20 is the Proton donor of the active site. Substrate is bound by residues Asp-28, His-106, and 128 to 130 (YAN).

Belongs to the RbsD / FucU family. RbsD subfamily. As to quaternary structure, homodecamer.

The protein localises to the cytoplasm. It carries out the reaction beta-D-ribopyranose = beta-D-ribofuranose. It functions in the pathway carbohydrate metabolism; D-ribose degradation; D-ribose 5-phosphate from beta-D-ribopyranose: step 1/2. Catalyzes the interconversion of beta-pyran and beta-furan forms of D-ribose. This Aliivibrio salmonicida (strain LFI1238) (Vibrio salmonicida (strain LFI1238)) protein is D-ribose pyranase.